The sequence spans 426 residues: Glutamate-1-semialdehyde 2,1-aminomutase (426 aa).

Lys-265 bears the N6-(pyridoxal phosphate)lysine mark.

The protein belongs to the class-III pyridoxal-phosphate-dependent aminotransferase family. HemL subfamily. As to quaternary structure, homodimer. Requires pyridoxal 5'-phosphate as cofactor.

Its subcellular location is the cytoplasm. It catalyses the reaction (S)-4-amino-5-oxopentanoate = 5-aminolevulinate. The protein operates within porphyrin-containing compound metabolism; protoporphyrin-IX biosynthesis; 5-aminolevulinate from L-glutamyl-tRNA(Glu): step 2/2. This Salmonella schwarzengrund (strain CVM19633) protein is Glutamate-1-semialdehyde 2,1-aminomutase.